Consider the following 242-residue polypeptide: tRNA pseudouridine synthase A (242 aa).

Residue Asp51 is the Nucleophile of the active site. A substrate-binding site is contributed by Tyr107.

The protein belongs to the tRNA pseudouridine synthase TruA family. As to quaternary structure, homodimer.

It carries out the reaction uridine(38/39/40) in tRNA = pseudouridine(38/39/40) in tRNA. Its function is as follows. Formation of pseudouridine at positions 38, 39 and 40 in the anticodon stem and loop of transfer RNAs. The sequence is that of tRNA pseudouridine synthase A from Helicobacter pylori (strain ATCC 700392 / 26695) (Campylobacter pylori).